Consider the following 974-residue polypeptide: Phosphoenolpyruvate carboxylase 1 (974 aa).

Catalysis depends on residues H164 and K604.

Belongs to the PEPCase type 1 family. Exists as a homotetramer or heterooligomer. Mg(2+) serves as cofactor.

Its subcellular location is the cytoplasm. It catalyses the reaction oxaloacetate + phosphate = phosphoenolpyruvate + hydrogencarbonate. With respect to regulation, activated by glutamine and dihydroxyacetone phosphate. Inhibited by glutamate, aspartate, 2-oxoglutarate and malate. Functionally, through the carboxylation of phosphoenolpyruvate (PEP) it forms oxaloacetate, a four-carbon dicarboxylic acid source for the tricarboxylic acid cycle. This chain is Phosphoenolpyruvate carboxylase 1, found in Chlamydomonas reinhardtii (Chlamydomonas smithii).